A 219-amino-acid chain; its full sequence is dTTP/UTP pyrophosphatase (219 aa).

Asp79 (proton acceptor) is an active-site residue.

Belongs to the Maf family. YhdE subfamily. A divalent metal cation serves as cofactor.

It is found in the cytoplasm. It carries out the reaction dTTP + H2O = dTMP + diphosphate + H(+). The catalysed reaction is UTP + H2O = UMP + diphosphate + H(+). Its function is as follows. Nucleoside triphosphate pyrophosphatase that hydrolyzes dTTP and UTP. May have a dual role in cell division arrest and in preventing the incorporation of modified nucleotides into cellular nucleic acids. The protein is dTTP/UTP pyrophosphatase of Oleidesulfovibrio alaskensis (strain ATCC BAA-1058 / DSM 17464 / G20) (Desulfovibrio alaskensis).